Reading from the N-terminus, the 319-residue chain is Cytochrome f (319 aa).

A signal peptide spans 1 to 35 (MQKKDVCEYITKWVSVTISTLVTIGVLVFPLSSEA). 4 residues coordinate heme: Tyr-36, Cys-56, Cys-59, and His-60. Residues 285–305 (IQGLLVFFASVVLAQIFLVLK) form a helical membrane-spanning segment.

The protein belongs to the cytochrome f family. In terms of assembly, the 4 large subunits of the cytochrome b6-f complex are cytochrome b6, subunit IV (17 kDa polypeptide, petD), cytochrome f and the Rieske protein, while the 4 small subunits are PetG, PetL, PetM and PetN. The complex functions as a dimer. Heme serves as cofactor.

It localises to the plastid. The protein resides in the chloroplast thylakoid membrane. Functionally, component of the cytochrome b6-f complex, which mediates electron transfer between photosystem II (PSII) and photosystem I (PSI), cyclic electron flow around PSI, and state transitions. The protein is Cytochrome f of Zygnema circumcarinatum (Green alga).